A 302-amino-acid chain; its full sequence is Myb-related protein Hv33 (302 aa).

HTH myb-type domains follow at residues 11–63 and 64–118; these read QPKV…INYL and RPDL…KKKL. 2 DNA-binding regions (H-T-H motif) span residues 39–63 and 91–114; these read WSSV…INYL and WSQI…NSCI. Positions 137–158 are disordered; it reads ATAAAALPDAEEEDRKPLCPAV.

Germinating seed and apical meristem of shoot and root.

The protein localises to the nucleus. Possible transcription activator in response to an external signal. May be involved in the regulation of flavonoid biosynthesis. The sequence is that of Myb-related protein Hv33 (MYB2) from Hordeum vulgare (Barley).